The following is a 123-amino-acid chain: Small ribosomal subunit protein uS12 (123 aa).

Asp-89 carries the 3-methylthioaspartic acid modification.

The protein belongs to the universal ribosomal protein uS12 family. In terms of assembly, part of the 30S ribosomal subunit. Contacts proteins S8 and S17. May interact with IF1 in the 30S initiation complex.

Functionally, with S4 and S5 plays an important role in translational accuracy. In terms of biological role, interacts with and stabilizes bases of the 16S rRNA that are involved in tRNA selection in the A site and with the mRNA backbone. Located at the interface of the 30S and 50S subunits, it traverses the body of the 30S subunit contacting proteins on the other side and probably holding the rRNA structure together. The combined cluster of proteins S8, S12 and S17 appears to hold together the shoulder and platform of the 30S subunit. The sequence is that of Small ribosomal subunit protein uS12 from Chelativorans sp. (strain BNC1).